The chain runs to 493 residues: Alpha-amylase-related protein (493 aa).

The first 19 residues, 1-19 (MFKLAFTLTLCLAGSLSLA), serve as a signal peptide directing secretion. Position 20 is a pyrrolidone carboxylic acid (Q20). Cysteines 47 and 103 form a disulfide. Residues N117, Q168, and D177 each contribute to the Ca(2+) site. The cysteines at positions 156 and 170 are disulfide-linked. Residue R205 participates in chloride binding. D207 acts as the Nucleophile in catalysis. H211 lines the Ca(2+) pocket. Residue E244 is the Proton donor of the active site. The chloride site is built by N307 and R342. Disulfide bonds link C375–C381, C417–C440, and C447–C459.

It belongs to the glycosyl hydrolase 13 family. As to quaternary structure, monomer. Ca(2+) is required as a cofactor. The cofactor is chloride.

The protein resides in the secreted. The catalysed reaction is Endohydrolysis of (1-&gt;4)-alpha-D-glucosidic linkages in polysaccharides containing three or more (1-&gt;4)-alpha-linked D-glucose units.. The polypeptide is Alpha-amylase-related protein (Amyrel) (Drosophila orena (Fruit fly)).